Here is a 105-residue protein sequence, read N- to C-terminus: T cell receptor alpha variable 40 (105 aa).

Residues 1 to 19 (MNSSLDFLILILMFGGTSS) form the signal peptide. Residues 20-105 (NSVKQTGQIT…DSAVYYCLLG (86 aa)) enclose the Ig-like domain. An N-linked (GlcNAc...) asparagine glycan is attached at N39. C40 and C102 are oxidised to a cystine.

In terms of assembly, alpha-beta TR is a heterodimer composed of an alpha and beta chain; disulfide-linked. The alpha-beta TR is associated with the transmembrane signaling CD3 coreceptor proteins to form the TR-CD3 (TcR or TCR). The assembly of alpha-beta TR heterodimers with CD3 occurs in the endoplasmic reticulum where a single alpha-beta TR heterodimer associates with one CD3D-CD3E heterodimer, one CD3G-CD3E heterodimer and one CD247 homodimer forming a stable octameric structure. CD3D-CD3E and CD3G-CD3E heterodimers preferentially associate with TR alpha and TR beta chains, respectively. The association of the CD247 homodimer is the last step of TcR assembly in the endoplasmic reticulum and is required for transport to the cell surface.

The protein resides in the cell membrane. Functionally, v region of the variable domain of T cell receptor (TR) alpha chain that participates in the antigen recognition. Alpha-beta T cell receptors are antigen specific receptors which are essential to the immune response and are present on the cell surface of T lymphocytes. Recognize peptide-major histocompatibility (MH) (pMH) complexes that are displayed by antigen presenting cells (APC), a prerequisite for efficient T cell adaptive immunity against pathogens. Binding of alpha-beta TR to pMH complex initiates TR-CD3 clustering on the cell surface and intracellular activation of LCK that phosphorylates the ITAM motifs of CD3G, CD3D, CD3E and CD247 enabling the recruitment of ZAP70. In turn ZAP70 phosphorylates LAT, which recruits numerous signaling molecules to form the LAT signalosome. The LAT signalosome propagates signal branching to three major signaling pathways, the calcium, the mitogen-activated protein kinase (MAPK) kinase and the nuclear factor NF-kappa-B (NF-kB) pathways, leading to the mobilization of transcription factors that are critical for gene expression and essential for T cell growth and differentiation. The T cell repertoire is generated in the thymus, by V-(D)-J rearrangement. This repertoire is then shaped by intrathymic selection events to generate a peripheral T cell pool of self-MH restricted, non-autoaggressive T cells. Post-thymic interaction of alpha-beta TR with the pMH complexes shapes TR structural and functional avidity. This is T cell receptor alpha variable 40 from Homo sapiens (Human).